The primary structure comprises 270 residues: Thiosulfate dehydrogenase (270 aa).

Residues Met1–Ala27 form the signal peptide. Cytochrome c domains follow at residues Pro44–Ala158 and Pro174–Pro260. Residues Cys76, Cys79, His80, Cys187, Cys190, and His191 each coordinate heme c.

As to quaternary structure, monomer. Post-translationally, binds 2 heme c groups covalently per subunit.

The protein resides in the periplasm. It carries out the reaction 2 thiosulfate + 2 Fe(III)-[cytochrome c] = tetrathionate + 2 Fe(II)-[cytochrome c] + 2 H(+). Its function is as follows. Catalyzes the oxidation of 2 molecules of thiosulfate to tetrathionate. The polypeptide is Thiosulfate dehydrogenase (tsdA) (Allochromatium vinosum (strain ATCC 17899 / DSM 180 / NBRC 103801 / NCIMB 10441 / D) (Chromatium vinosum)).